We begin with the raw amino-acid sequence, 492 residues long: Mitochondrial distribution and morphology protein 12 (492 aa).

Positions 1 to 492 constitute an SMP-LTD domain; the sequence is MSIDLNWETV…VYPSFWTFLV (492 aa). 3 disordered regions span residues 68 to 158, 199 to 301, and 379 to 434; these read DFYE…STPG, LEGH…GHPR, and AVGG…GSGN. Acidic residues predominate over residues 78 to 90; it reads VASDDSEGEEDAV. Residues 130 to 139 are compositionally biased toward gly residues; sequence SPGGPGGPGM. Residues 246 to 257 are compositionally biased toward low complexity; the sequence is LNPNSLAPPSSS. A compositionally biased stretch (polar residues) spans 270–285; that stretch reads TTPAPGSATALSGSNE. Low complexity predominate over residues 387-400; sequence GLSSPGEGPSQAQG. Residues 401–415 show a composition bias toward gly residues; the sequence is QGQGQGQGQGQGQTP. Over residues 416 to 428 the composition is skewed to low complexity; that stretch reads GAGQQKQQKKQAG.

It belongs to the MDM12 family. In terms of assembly, component of the ER-mitochondria encounter structure (ERMES) or MDM complex, composed of MMM1, MDM10, MDM12 and MDM34. An MMM1 homodimer associates with one molecule of MDM12 on each side in a pairwise head-to-tail manner, and the SMP-LTD domains of MMM1 and MDM12 generate a continuous hydrophobic tunnel for phospholipid trafficking.

The protein resides in the mitochondrion outer membrane. Its subcellular location is the endoplasmic reticulum membrane. Functionally, component of the ERMES/MDM complex, which serves as a molecular tether to connect the endoplasmic reticulum (ER) and mitochondria. Components of this complex are involved in the control of mitochondrial shape and protein biogenesis, and function in nonvesicular lipid trafficking between the ER and mitochondria. MDM12 is required for the interaction of the ER-resident membrane protein MMM1 and the outer mitochondrial membrane-resident beta-barrel protein MDM10. The MDM12-MMM1 subcomplex functions in the major beta-barrel assembly pathway that is responsible for biogenesis of all mitochondrial outer membrane beta-barrel proteins, and acts in a late step after the SAM complex. The MDM10-MDM12-MMM1 subcomplex further acts in the TOM40-specific pathway after the action of the MDM12-MMM1 complex. Essential for establishing and maintaining the structure of mitochondria and maintenance of mtDNA nucleoids. This is Mitochondrial distribution and morphology protein 12 from Chaetomium globosum (strain ATCC 6205 / CBS 148.51 / DSM 1962 / NBRC 6347 / NRRL 1970) (Soil fungus).